Here is a 59-residue protein sequence, read N- to C-terminus: Large ribosomal subunit protein uL30 (59 aa).

Belongs to the universal ribosomal protein uL30 family. As to quaternary structure, part of the 50S ribosomal subunit.

This chain is Large ribosomal subunit protein uL30, found in Staphylococcus epidermidis (strain ATCC 12228 / FDA PCI 1200).